Consider the following 251-residue polypeptide: Triosephosphate isomerase (251 aa).

Substrate is bound at residue 9-11 (NWK). Histidine 95 acts as the Electrophile in catalysis. The active-site Proton acceptor is glutamate 167. Residues glycine 173, serine 213, and 234-235 (GG) each bind substrate.

Belongs to the triosephosphate isomerase family. Homodimer.

Its subcellular location is the cytoplasm. The catalysed reaction is D-glyceraldehyde 3-phosphate = dihydroxyacetone phosphate. It participates in carbohydrate biosynthesis; gluconeogenesis. The protein operates within carbohydrate degradation; glycolysis; D-glyceraldehyde 3-phosphate from glycerone phosphate: step 1/1. Involved in the gluconeogenesis. Catalyzes stereospecifically the conversion of dihydroxyacetone phosphate (DHAP) to D-glyceraldehyde-3-phosphate (G3P). This is Triosephosphate isomerase from Carboxydothermus hydrogenoformans (strain ATCC BAA-161 / DSM 6008 / Z-2901).